The sequence spans 521 residues: uncharacterized protein (521 aa).

The segment covering 1-15 (MLSFRNQPGNPSGNL) has biased composition (polar residues). The segment at 1–20 (MLSFRNQPGNPSGNLTFGGV) is disordered.

This is an uncharacterized protein from Micromonas pusilla (Picoplanktonic green alga).